We begin with the raw amino-acid sequence, 192 residues long: MTSVLMIDNCDSFTYNLVDQFSPHGTIVIVKRNHPFYDGEIEAIMALTSICITPGPCYPAEAALNSCSIIGHLAGRIPILGICLGQQALGQARGGLVIFAHGKLSNIEHNGIFAPLFNPPRALPAGRYHSLVVEPARIEVTGQCNQLEVVPQEIMAIRHRDLPVEGVQFHPESILSSNGAAILANLIHRPCH.

One can recognise a Glutamine amidotransferase type-1 domain in the interval 3–192; it reads SVLMIDNCDS…LANLIHRPCH (190 aa). Catalysis depends on residues Cys83, His170, and Glu172.

Monomer. Heterodimer consisting of two non-identical subunits: a glutamine amidotransferase subunit (PabA) and a aminodeoxychorismate synthase subunit (PabB).

The enzyme catalyses chorismate + L-glutamine = 4-amino-4-deoxychorismate + L-glutamate. It functions in the pathway cofactor biosynthesis; tetrahydrofolate biosynthesis; 4-aminobenzoate from chorismate: step 1/2. Functionally, part of a heterodimeric complex that catalyzes the two-step biosynthesis of 4-amino-4-deoxychorismate (ADC), a precursor of p-aminobenzoate (PABA) and tetrahydrofolate. In the first step, a glutamine amidotransferase (PabA) generates ammonia as a substrate that, along with chorismate, is used in the second step, catalyzed by aminodeoxychorismate synthase (PabB) to produce ADC. PabA converts glutamine into glutamate only in the presence of stoichiometric amounts of PabB. This Streptomyces lividans protein is Aminodeoxychorismate synthase component 2.